A 268-amino-acid chain; its full sequence is Phosphatidylglycerol--prolipoprotein diacylglyceryl transferase (268 aa).

The next 4 membrane-spanning stretches (helical) occupy residues 14-34 (LGPIKIHWYGLMYLLGIFAGW), 57-77 (LTFYVALGVILGGRIGYIIFY), 90-110 (FFLWDGGMSFHGGFIGVLIAF), and 117-137 (IGANFFDLGEFVAPVIPIGLG). Position 140 (Arg-140) interacts with a 1,2-diacyl-sn-glycero-3-phospho-(1'-sn-glycerol). Helical transmembrane passes span 174–194 (QLFEFFFEGVVLFSVLWLVTI), 200–220 (YLVLGLFMFLYGCARFICEFF), and 240–260 (ILSIPMILLGAVILIAVFIKI).

Belongs to the Lgt family.

Its subcellular location is the cell inner membrane. The enzyme catalyses L-cysteinyl-[prolipoprotein] + a 1,2-diacyl-sn-glycero-3-phospho-(1'-sn-glycerol) = an S-1,2-diacyl-sn-glyceryl-L-cysteinyl-[prolipoprotein] + sn-glycerol 1-phosphate + H(+). It participates in protein modification; lipoprotein biosynthesis (diacylglyceryl transfer). Functionally, catalyzes the transfer of the diacylglyceryl group from phosphatidylglycerol to the sulfhydryl group of the N-terminal cysteine of a prolipoprotein, the first step in the formation of mature lipoproteins. In Francisella tularensis subsp. tularensis (strain FSC 198), this protein is Phosphatidylglycerol--prolipoprotein diacylglyceryl transferase.